A 203-amino-acid polypeptide reads, in one-letter code: Somatotropin (203 aa).

The first 17 residues, 1 to 17 (MDRVVIVLSVLSVAASS), serve as a signal peptide directing secretion. The residue at position 18 (Q18) is a Pyrrolidone carboxylic acid. H35 contacts Zn(2+). The cysteines at positions 68 and 176 are disulfide-linked. E185 serves as a coordination point for Zn(2+). A disulfide bridge links C193 with C201.

The protein belongs to the somatotropin/prolactin family.

It is found in the secreted. Its function is as follows. Growth hormone plays an important role in growth control and is involved in the regulation of several anabolic processes. Implicated as an osmoregulatory substance important for seawater adaptation. The sequence is that of Somatotropin (gh) from Solea senegalensis (Senegalese sole).